The following is a 512-amino-acid chain: FAD-dependent monooxygenase prx3 (512 aa).

The signal sequence occupies residues 1–19; sequence MLSLKAFLALSLSIHLSQG. An FAD-binding PCMH-type domain is found at 63 to 235; the sequence is CQTTPTCVFA…TRFDLATFSV (173 aa). Residue His-100 is modified to Pros-8alpha-FAD histidine. Asn-197, Asn-281, Asn-307, Asn-329, Asn-361, and Asn-477 each carry an N-linked (GlcNAc...) asparagine glycan.

The protein belongs to the oxygen-dependent FAD-linked oxidoreductase family.

It functions in the pathway sesquiterpene biosynthesis. Its function is as follows. FAD-dependent monooxygenase; part of the gene cluster that mediates the biosynthesis of PR-toxin, a bicyclic sesquiterpene belonging to the eremophilane class and acting as a mycotoxin. The first step of the pathway is catalyzed by the aristolochene synthase which performs the cyclization of trans,trans-farnesyl diphosphate (FPP) to the bicyclic sesquiterpene aristolochene. Following the formation of aristolochene, the non-oxygenated aristolochene is converted to the trioxygenated intermediate eremofortin B, via 7-epi-neopetasone. This conversion appears to involve three enzymes, a hydroxysterol oxidase-like enzyme, the quinone-oxidase prx3 that forms the quinone-type-structure in the bicyclic nucleus of aristolochene with the C8-oxo group and the C-3 hydroxyl group, and the P450 monooxygenase ORF6 that introduces the epoxide at the double bond between carbons 1 and 2. No monoxy or dioxy-intermediates have been reported to be released to the broth, so these three early oxidative reactions may be coupled together. Eremofortin B is further oxidized by another P450 monooxygenase, that introduces a second epoxide between carbons 7 and 11 prior to acetylation to eremofortin A by the acetyltransferase ORF8. The second epoxidation may be performed by a second P450 monooxygenase. After the acetylation step, eremofortin A is converted to eremofortin C and then to PR-toxin. First the conversion of eremofortin A to eremofortin C proceeds by oxidation of the side chain of the molecule at C-12 and is catalyzed by the short-chain oxidoreductase prx1. The cytochrome P450 monooxygenase ORF6 is probably also involved in this step. The primary alcohol formed at C-12 is finally oxidized by the short-chain alcohol dehydrogenase prx4 that forms PR-toxin. The polypeptide is FAD-dependent monooxygenase prx3 (Penicillium roqueforti (strain FM164)).